Reading from the N-terminus, the 342-residue chain is Autoinducer 2 import system permease protein LsrC (342 aa).

The Periplasmic segment spans residues 1–13 (MLKFIQNNREITA). Residues 14 to 34 (LLAVLLLFVLPGFLDRQYLSV) traverse the membrane as a helical segment. The Cytoplasmic segment spans residues 35-38 (QTLT). A helical transmembrane segment spans residues 39 to 59 (MVYSSAQILILLAMGATLVML). Residues 60-69 (TRNIDVSVGS) are Periplasmic-facing. A helical transmembrane segment spans residues 70 to 90 (ITGMCAVLLGMLLNAGYSLPV). Residues 91-92 (AC) are Cytoplasmic-facing. A helical transmembrane segment spans residues 93 to 113 (VATLLLGLLAGFFNGVLVAWL). Position 114 (Lys114) is a topological domain, periplasmic. Residues 115 to 135 (IPAIVATLGTLGLYRGIMLLW) form a helical membrane-spanning segment. Topologically, residues 136–154 (TGGKWIEGLPAELKQLSAP) are cytoplasmic. A helical membrane pass occupies residues 155 to 175 (LLLGVSAIGWLTIILVAFMAW). Residues 176-212 (LLAKTAFGRSFYATGDNLQGARQLGVRTEAIRIVAFS) are Periplasmic-facing. The chain crosses the membrane as a helical span at residues 213-233 (LNGCMAALAGIVFASQIGFIP). The Cytoplasmic portion of the chain corresponds to 234-251 (NQTGTGLEMKAIAACVLG). A helical membrane pass occupies residues 252–272 (GISLLGGSGAIIGAVLGAWFL). At 273–283 (TQIDSVLVLLR) the chain is on the periplasmic side. The chain crosses the membrane as a helical span at residues 284–304 (IPAWWNDFIAGLVLLAVLVFD). Residues 305–342 (GRLRCALELNLRRQKYARFMTPPPSVKPASSGKKREAA) lie on the Cytoplasmic side of the membrane.

The protein belongs to the binding-protein-dependent transport system permease family. AraH/RbsC subfamily. As to quaternary structure, the complex is composed of two ATP-binding proteins (LsrA), two transmembrane proteins (LsrC and LsrD) and a solute-binding protein (LsrB).

It is found in the cell inner membrane. In terms of biological role, part of the ABC transporter complex LsrABCD involved in autoinducer 2 (AI-2) import. Probably responsible for the translocation of the substrate across the membrane. This chain is Autoinducer 2 import system permease protein LsrC (lsrC), found in Escherichia coli O157:H7.